The sequence spans 311 residues: Bifunctional protein FolD (311 aa).

Residues 180–182 (GRS), Ser209, and Ile250 contribute to the NADP(+) site.

It belongs to the tetrahydrofolate dehydrogenase/cyclohydrolase family. As to quaternary structure, homodimer.

It carries out the reaction (6R)-5,10-methylene-5,6,7,8-tetrahydrofolate + NADP(+) = (6R)-5,10-methenyltetrahydrofolate + NADPH. The catalysed reaction is (6R)-5,10-methenyltetrahydrofolate + H2O = (6R)-10-formyltetrahydrofolate + H(+). It participates in one-carbon metabolism; tetrahydrofolate interconversion. Its function is as follows. Catalyzes the oxidation of 5,10-methylenetetrahydrofolate to 5,10-methenyltetrahydrofolate and then the hydrolysis of 5,10-methenyltetrahydrofolate to 10-formyltetrahydrofolate. The chain is Bifunctional protein FolD from Haloquadratum walsbyi (strain DSM 16790 / HBSQ001).